A 102-amino-acid chain; its full sequence is Small ribosomal subunit protein uS10 (102 aa).

The protein belongs to the universal ribosomal protein uS10 family. In terms of assembly, part of the 30S ribosomal subunit.

Functionally, involved in the binding of tRNA to the ribosomes. In Streptococcus pneumoniae (strain Taiwan19F-14), this protein is Small ribosomal subunit protein uS10.